The primary structure comprises 729 residues: Ran-binding protein 9 (729 aa).

Pro residues predominate over residues M1–Q11. The disordered stretch occupies residues M1–D137. A compositionally biased stretch (low complexity) spans L27–G49. Residues S50–L60 show a composition bias toward gly residues. Residues H70–A93 show a composition bias toward pro residues. Positions G107 to G126 are enriched in low complexity. One can recognise a B30.2/SPRY domain in the interval L147 to F334. Positions W365–V397 constitute a LisH domain. The segment at L401–R407 is interaction with CALB1. Residues S403 to V460 form the CTLH domain. K405 carries the N6-acetyllysine modification. The disordered stretch occupies residues R461–S489. The span at S473 to S489 shows a compositional bias: low complexity. 2 positions are modified to phosphoserine: S477 and S487. Residues A615–H729 are interaction with FMR1.

The protein belongs to the RANBP9/10 family. In terms of assembly, part of a complex consisting of RANBP9, MKLN1 and GID8. Identified in the CTLH complex that contains GID4, RANBP9 and/or RANBP10, MKLN1, MAEA, RMND5A (or alternatively its paralog RMND5B), GID8, ARMC8, WDR26 and YPEL5. Within this complex, MAEA, RMND5A (or alternatively its paralog RMND5B), GID8, WDR26, and RANBP9 and/or RANBP10 form the catalytic core, while GID4, MKLN1, ARMC8 and YPEL5 have ancillary roles. Interacts with GTP-bound Ran, AR, CDC2L1/p110C, CALB1, S100A7, USP11, MKLN1, SOS1 or SOS2, GID8, and FMR1. Interacts with the Dyrk kinases HIPK2, DYRK1A, and DYRK1B. Interacts with TP73 isoform Alpha but not with TP53. Interacts with the HGF receptor MET and the integrins ITGB1 and ITGB2, but not with ITGAL. Part of a complex consisting of RANBP9, RAN, DYRK1B and COPS5. Directly interacts with RANBP10. Interacts with YPEL5. Interacts with DDX4. Interacts with NGFR. Interacts with TEX19. In terms of processing, phosphorylated in response to stress. Can be phosphorylated by the cleaved p110 form of CDC2L1 (p110C). Ubiquitinated. Polyubiquitination targets the protein for rapid degradation via the ubiquitin system. Can be deubiquitinated by USP11. As to expression, ubiquitously expressed, with highest levels in testes, placenta, heart, and muscle, and lowest levels in lung. Within the brain, expressed predominantly by neurons in the gray matter of cortex, the granular layer of cerebellum and the Purkinje cells.

The protein resides in the cytoplasm. The protein localises to the nucleus. Its subcellular location is the cell membrane. Functionally, may act as scaffolding protein, and as adapter protein to couple membrane receptors to intracellular signaling pathways. Acts as a mediator of cell spreading and actin cytoskeleton rearrangement. Core component of the CTLH E3 ubiquitin-protein ligase complex that selectively accepts ubiquitin from UBE2H and mediates ubiquitination and subsequent proteasomal degradation of the transcription factor HBP1. May be involved in signaling of ITGB2/LFA-1 and other integrins. Enhances HGF-MET signaling by recruiting Sos and activating the Ras pathway. Enhances dihydrotestosterone-induced transactivation activity of AR, as well as dexamethasone-induced transactivation activity of NR3C1, but not affect estrogen-induced transactivation. Stabilizes TP73 isoform Alpha, probably by inhibiting its ubiquitination, and increases its proapoptotic activity. Inhibits the kinase activity of DYRK1A and DYRK1B. Inhibits FMR1 binding to RNA. The chain is Ran-binding protein 9 (RANBP9) from Homo sapiens (Human).